Reading from the N-terminus, the 255-residue chain is UDP-2,3-diacylglucosamine hydrolase (255 aa).

D8, H10, D41, N79, and H114 together coordinate Mn(2+). N79 to R80 lines the substrate pocket. Positions 122, 160, 164, 167, and 195 each coordinate substrate. Mn(2+) contacts are provided by H195 and H197.

It belongs to the LpxH family. Requires Mn(2+) as cofactor.

Its subcellular location is the cell inner membrane. The catalysed reaction is UDP-2-N,3-O-bis[(3R)-3-hydroxytetradecanoyl]-alpha-D-glucosamine + H2O = 2-N,3-O-bis[(3R)-3-hydroxytetradecanoyl]-alpha-D-glucosaminyl 1-phosphate + UMP + 2 H(+). The protein operates within glycolipid biosynthesis; lipid IV(A) biosynthesis; lipid IV(A) from (3R)-3-hydroxytetradecanoyl-[acyl-carrier-protein] and UDP-N-acetyl-alpha-D-glucosamine: step 4/6. Hydrolyzes the pyrophosphate bond of UDP-2,3-diacylglucosamine to yield 2,3-diacylglucosamine 1-phosphate (lipid X) and UMP by catalyzing the attack of water at the alpha-P atom. Involved in the biosynthesis of lipid A, a phosphorylated glycolipid that anchors the lipopolysaccharide to the outer membrane of the cell. This Hamiltonella defensa subsp. Acyrthosiphon pisum (strain 5AT) protein is UDP-2,3-diacylglucosamine hydrolase.